We begin with the raw amino-acid sequence, 612 residues long: Dihydroxy-acid dehydratase (612 aa).

Aspartate 81 provides a ligand contact to Mg(2+). Cysteine 122 contacts [2Fe-2S] cluster. Mg(2+) contacts are provided by aspartate 123 and lysine 124. At lysine 124 the chain carries N6-carboxylysine. Cysteine 193 is a [2Fe-2S] cluster binding site. Glutamate 489 lines the Mg(2+) pocket. Serine 515 (proton acceptor) is an active-site residue.

This sequence belongs to the IlvD/Edd family. In terms of assembly, homodimer. The cofactor is [2Fe-2S] cluster. Mg(2+) serves as cofactor.

The enzyme catalyses (2R)-2,3-dihydroxy-3-methylbutanoate = 3-methyl-2-oxobutanoate + H2O. It carries out the reaction (2R,3R)-2,3-dihydroxy-3-methylpentanoate = (S)-3-methyl-2-oxopentanoate + H2O. It participates in amino-acid biosynthesis; L-isoleucine biosynthesis; L-isoleucine from 2-oxobutanoate: step 3/4. Its pathway is amino-acid biosynthesis; L-valine biosynthesis; L-valine from pyruvate: step 3/4. Functions in the biosynthesis of branched-chain amino acids. Catalyzes the dehydration of (2R,3R)-2,3-dihydroxy-3-methylpentanoate (2,3-dihydroxy-3-methylvalerate) into 2-oxo-3-methylpentanoate (2-oxo-3-methylvalerate) and of (2R)-2,3-dihydroxy-3-methylbutanoate (2,3-dihydroxyisovalerate) into 2-oxo-3-methylbutanoate (2-oxoisovalerate), the penultimate precursor to L-isoleucine and L-valine, respectively. The sequence is that of Dihydroxy-acid dehydratase from Stenotrophomonas maltophilia (strain R551-3).